Reading from the N-terminus, the 804-residue chain is Phenylalanine--tRNA ligase beta subunit (804 aa).

The region spanning 40–155 (GEGIKGVVIG…GDAETGADAL (116 aa)) is the tRNA-binding domain. The B5 domain occupies 409–484 (IKENVIRLSV…RLYGYDNIPS (76 aa)). Residues Asp-462, Asp-468, Glu-471, and Glu-472 each contribute to the Mg(2+) site. An FDX-ACB domain is found at 710-803 (PKYPSVTRDI…LEDKYQAVLR (94 aa)).

This sequence belongs to the phenylalanyl-tRNA synthetase beta subunit family. Type 1 subfamily. In terms of assembly, tetramer of two alpha and two beta subunits. It depends on Mg(2+) as a cofactor.

The protein localises to the cytoplasm. The enzyme catalyses tRNA(Phe) + L-phenylalanine + ATP = L-phenylalanyl-tRNA(Phe) + AMP + diphosphate + H(+). The sequence is that of Phenylalanine--tRNA ligase beta subunit from Bacillus licheniformis (strain ATCC 14580 / DSM 13 / JCM 2505 / CCUG 7422 / NBRC 12200 / NCIMB 9375 / NCTC 10341 / NRRL NRS-1264 / Gibson 46).